The following is a 203-amino-acid chain: Acid phosphatase (203 aa).

The active-site Tele-phosphohistidine intermediate is His13. Glu85 functions as the Proton donor/acceptor in the catalytic mechanism.

The protein belongs to the phosphoglycerate mutase family. In terms of assembly, homodimer.

The catalysed reaction is a phosphate monoester + H2O = an alcohol + phosphate. It catalyses the reaction beta-D-fructose 1,6-bisphosphate + H2O = beta-D-fructose 6-phosphate + phosphate. It functions in the pathway carbohydrate biosynthesis; gluconeogenesis. With respect to regulation, in contrast to classical FBPases, is resistant to inhibition by lithium. Its function is as follows. Phosphatase with a broad specificity. Can dephosphorylate a variety of substrates including phosphorylated sugars like fructose-6-phosphate (F6P). Is able to function in vivo as a fructose-1,6-bisphosphatase (FBPase) and to maintain gluconeogenesis when the classical FBPase GlpX is absent. Shows negligible phosphoglycerate mutase activity. Has no phosphatase activity against 3-phosphoglycerate, 2,3-bisphosphoglycerate, or hydrophobic substrates such as alpha-napthyl phosphate. In Mycobacterium tuberculosis (strain ATCC 25618 / H37Rv), this protein is Acid phosphatase.